The chain runs to 365 residues: MSMEEAEECSAACGFSLTCQEDGADLGDGVVDDDDDGDVFLFYNAVAAADDEEEEEEYVEQMVSKEASFCCSSSSSLFDAAAGDGYGDGDGDGDWFRQARLAAVKWILETRGYFGFGHRTAYLAIAYFDRFCLRRRVDREAMPWAARLLSIACVSVAAKMEEYQSPALSEFDAGGGRVFCSDSIRRMELLVLSTLGWRMGAVTPFDFLPCFSSRLHRHHHGGAGAAGHGAAAAARVALNAVGFIFATAEAGSVLDYRPSTVAAAAILAASYGAPLTKEALESKMSNLSPSCLIDKENVHACYSMMVGDMNNNRRSSKRPLQCSDSNEITTTSTYDSVLVDDVTDTAAFAATAMNKRLRPEPPRIR.

This sequence belongs to the cyclin family. Cyclin D subfamily.

This chain is Cyclin-D5-2 (CYCD5-2), found in Oryza sativa subsp. japonica (Rice).